The following is a 432-amino-acid chain: MLDIQLLRKDIDGVAKRLADRGYILDVAAFSALEAERRAIQTRTEELQAKRNSLSKQIGAMKGRGEDTSAVMAEVGGIGDEMKASAVQLEDIQKRLSDLLLGVPNLAHESVPVGNDEAGNVEVRRWGTPRQFDFEIKDHVDVGTPLGLDFETGAKLSGARFTLLRGQIARLHRALAQFMIDTHTQQHGYTEVYTPYIVNPEILFGTGQLPKFADDMFRVEKGGGENTVTQYLISTSEISLTNTVRDSIVDSNELPIKLTAHSPCFRSEAGSYGRDTRGMIRQHQFDKVEMVQIVSPDTSYDALEQMVAHAEVILQKLELPYRVITLCTGDMGFSAAKTYDLEVWVPAQNTYREISSCSNTEAFQARRMQARFRNAQGKPELVHTLNGSGLAVGRTLVAVLENFQNADGSVTVPAALRPYLGGVDRLEVKASA.

Position 235 to 237 (235 to 237 (TSE)) interacts with L-serine. 266–268 (RSE) lines the ATP pocket. Position 289 (Glu-289) interacts with L-serine. 353–356 (EISS) is a binding site for ATP. Residue Ser-388 participates in L-serine binding.

Belongs to the class-II aminoacyl-tRNA synthetase family. Type-1 seryl-tRNA synthetase subfamily. As to quaternary structure, homodimer. The tRNA molecule binds across the dimer.

Its subcellular location is the cytoplasm. The catalysed reaction is tRNA(Ser) + L-serine + ATP = L-seryl-tRNA(Ser) + AMP + diphosphate + H(+). It catalyses the reaction tRNA(Sec) + L-serine + ATP = L-seryl-tRNA(Sec) + AMP + diphosphate + H(+). It functions in the pathway aminoacyl-tRNA biosynthesis; selenocysteinyl-tRNA(Sec) biosynthesis; L-seryl-tRNA(Sec) from L-serine and tRNA(Sec): step 1/1. Functionally, catalyzes the attachment of serine to tRNA(Ser). Is also able to aminoacylate tRNA(Sec) with serine, to form the misacylated tRNA L-seryl-tRNA(Sec), which will be further converted into selenocysteinyl-tRNA(Sec). This Paraburkholderia phymatum (strain DSM 17167 / CIP 108236 / LMG 21445 / STM815) (Burkholderia phymatum) protein is Serine--tRNA ligase.